A 93-amino-acid polypeptide reads, in one-letter code: Large ribosomal subunit protein bL27 (93 aa).

It belongs to the bacterial ribosomal protein bL27 family.

This is Large ribosomal subunit protein bL27 from Trichormus variabilis (strain ATCC 29413 / PCC 7937) (Anabaena variabilis).